We begin with the raw amino-acid sequence, 126 residues long: Holo-[acyl-carrier-protein] synthase (126 aa).

2 residues coordinate Mg(2+): Asp-9 and Glu-58.

It belongs to the P-Pant transferase superfamily. AcpS family. It depends on Mg(2+) as a cofactor.

It is found in the cytoplasm. It catalyses the reaction apo-[ACP] + CoA = holo-[ACP] + adenosine 3',5'-bisphosphate + H(+). In terms of biological role, transfers the 4'-phosphopantetheine moiety from coenzyme A to a Ser of acyl-carrier-protein. The protein is Holo-[acyl-carrier-protein] synthase of Buchnera aphidicola subsp. Acyrthosiphon pisum (strain APS) (Acyrthosiphon pisum symbiotic bacterium).